The following is a 493-amino-acid chain: Cytochrome P450 2E1 (493 aa).

298–303 contacts substrate; sequence FAGTET. A heme-binding site is contributed by Cys437.

The protein belongs to the cytochrome P450 family. As to quaternary structure, interacts with chaperones HSP70 and HSP90; this interaction is required for initial targeting to mitochondria. Requires heme as cofactor.

Its subcellular location is the endoplasmic reticulum membrane. The protein localises to the microsome membrane. The protein resides in the mitochondrion inner membrane. It catalyses the reaction an organic molecule + reduced [NADPH--hemoprotein reductase] + O2 = an alcohol + oxidized [NADPH--hemoprotein reductase] + H2O + H(+). The enzyme catalyses (5Z,8Z,11Z)-eicosatrienoate + reduced [NADPH--hemoprotein reductase] + O2 = 19-hydroxy-(5Z,8Z,11Z)-eicosatrienoate + oxidized [NADPH--hemoprotein reductase] + H2O + H(+). It carries out the reaction (5Z,8Z,11Z,14Z,17Z)-eicosapentaenoate + reduced [NADPH--hemoprotein reductase] + O2 = 19-hydroxy-(5Z,8Z,11Z,14Z,17Z)-eicosapentaenoate + oxidized [NADPH--hemoprotein reductase] + H2O + H(+). The catalysed reaction is (4Z,7Z,10Z,13Z,16Z,19Z)-docosahexaenoate + reduced [NADPH--hemoprotein reductase] + O2 = 21-hydroxy-(4Z,7Z,10Z,13Z,16Z,19Z)-docosahexaenoate + oxidized [NADPH--hemoprotein reductase] + H2O + H(+). It catalyses the reaction dodecanoate + reduced [NADPH--hemoprotein reductase] + O2 = 11-hydroxydodecanoate + oxidized [NADPH--hemoprotein reductase] + H2O + H(+). The enzyme catalyses tetradecanoate + reduced [NADPH--hemoprotein reductase] + O2 = 13-hydroxytetradecanoate + oxidized [NADPH--hemoprotein reductase] + H2O + H(+). It carries out the reaction 4-nitrophenol + NADPH + O2 + H(+) = 4-nitrocatechol + NADP(+) + H2O. Its pathway is lipid metabolism; fatty acid metabolism. The omega-1 hydroxylase activity is stimulated by cytochrome b5. Its function is as follows. A cytochrome P450 monooxygenase involved in the metabolism of fatty acids. Mechanistically, uses molecular oxygen inserting one oxygen atom into a substrate, and reducing the second into a water molecule, with two electrons provided by NADPH via cytochrome P450 reductase (NADPH--hemoprotein reductase). Catalyzes the hydroxylation of carbon-hydrogen bonds. Hydroxylates fatty acids specifically at the omega-1 position displaying the highest catalytic activity for saturated fatty acids. May be involved in the oxidative metabolism of xenobiotics. The sequence is that of Cytochrome P450 2E1 (CYP2E1) from Mesocricetus auratus (Golden hamster).